Here is a 181-residue protein sequence, read N- to C-terminus: CASP-like protein UU-1 (181 aa).

At 1 to 30 (MTMELESQEVVVETTTAAAAARAASAAHVR) the chain is on the cytoplasmic side. The helical transmembrane segment at 31–51 (TTVALRLLAFAASLAAAVVVA) threads the bilayer. Over 52–65 (TNRQERWGITVTFK) the chain is Extracellular. Residues 66-86 (MFAVWEAFVAINFACAAYALL) form a helical membrane-spanning segment. The Cytoplasmic portion of the chain corresponds to 87–107 (TAVFVKKLVSKHWLHHMDQFT). A helical transmembrane segment spans residues 108–128 (VNLQAASTAGAGAVGSVAMWG). The Extracellular portion of the chain corresponds to 129-147 (NEPSGWYAVCRLYRLYCDR). A helical transmembrane segment spans residues 148 to 168 (GAVSLALAFVAFVAFGVASSL). Residues 169 to 181 (SRYPRAPPPPAPR) lie on the Cytoplasmic side of the membrane.

It belongs to the Casparian strip membrane proteins (CASP) family. In terms of assembly, homodimer and heterodimers.

It localises to the cell membrane. The protein is CASP-like protein UU-1 of Sorghum bicolor (Sorghum).